A 198-amino-acid polypeptide reads, in one-letter code: HTH-type transcriptional regulator BetI (198 aa).

In terms of domain architecture, HTH tetR-type spans 8–68 (PLRRRELIDA…ATMRHLLREL (61 aa)). Positions 31–50 (TVAQIAHEAGVSPALAHHYF) form a DNA-binding region, H-T-H motif.

The protein operates within amine and polyamine biosynthesis; betaine biosynthesis via choline pathway [regulation]. In terms of biological role, repressor involved in the biosynthesis of the osmoprotectant glycine betaine. It represses transcription of the choline transporter BetT and the genes of BetAB involved in the synthesis of glycine betaine. In Brucella melitensis biotype 2 (strain ATCC 23457), this protein is HTH-type transcriptional regulator BetI.